The chain runs to 495 residues: ATP synthase subunit beta, chloroplastic (495 aa).

An ATP-binding site is contributed by 172–179; that stretch reads GGAGVGKT.

This sequence belongs to the ATPase alpha/beta chains family. As to quaternary structure, F-type ATPases have 2 components, CF(1) - the catalytic core - and CF(0) - the membrane proton channel. CF(1) has five subunits: alpha(3), beta(3), gamma(1), delta(1), epsilon(1). CF(0) has four main subunits: a(1), b(1), b'(1) and c(9-12).

Its subcellular location is the plastid. The protein localises to the chloroplast thylakoid membrane. The enzyme catalyses ATP + H2O + 4 H(+)(in) = ADP + phosphate + 5 H(+)(out). Functionally, produces ATP from ADP in the presence of a proton gradient across the membrane. The catalytic sites are hosted primarily by the beta subunits. In Pseudogaltonia clavata (Cape hyacinth), this protein is ATP synthase subunit beta, chloroplastic.